A 295-amino-acid chain; its full sequence is Zygote arrest protein 1.S (295 aa).

Disordered regions lie at residues 80–115 (SVQC…TKTV) and 144–186 (EKGE…APAQ). The span at 144-176 (EKGEAVRSEGSEGGRQEGKQGDGEIKEQMKMDK) shows a compositional bias: basic and acidic residues. Residues 197 to 280 (KYGYYHCKDC…RQDLCGRCKG (84 aa)) form a 3CxxC-type zinc finger.

Belongs to the ZAR1 family. Ovary. Also expressed in lung and muscle.

It localises to the cytoplasm. It is found in the cytoplasmic ribonucleoprotein granule. In terms of biological role, mRNA-binding protein required for maternal mRNA storage, translation and degradation during oocyte maturation. Probably promotes formation of some phase-separated membraneless compartment that stores maternal mRNAs in oocytes: acts by undergoing liquid-liquid phase separation upon binding to maternal mRNAs. Binds to the 3'-UTR of maternal mRNAs in immature oocytes, inhibiting their translation. This chain is Zygote arrest protein 1.S (zar1.S), found in Xenopus laevis (African clawed frog).